The sequence spans 322 residues: tRNA U34 carboxymethyltransferase (322 aa).

Residues lysine 92, tryptophan 106, lysine 111, glycine 131, 153–155 (DPS), 181–182 (VE), methionine 196, tyrosine 200, and arginine 315 each bind carboxy-S-adenosyl-L-methionine.

Belongs to the class I-like SAM-binding methyltransferase superfamily. CmoB family. Homotetramer.

The catalysed reaction is carboxy-S-adenosyl-L-methionine + 5-hydroxyuridine(34) in tRNA = 5-carboxymethoxyuridine(34) in tRNA + S-adenosyl-L-homocysteine + H(+). Functionally, catalyzes carboxymethyl transfer from carboxy-S-adenosyl-L-methionine (Cx-SAM) to 5-hydroxyuridine (ho5U) to form 5-carboxymethoxyuridine (cmo5U) at position 34 in tRNAs. The polypeptide is tRNA U34 carboxymethyltransferase (Pseudoalteromonas translucida (strain TAC 125)).